The primary structure comprises 187 residues: CASP-like protein 2C1 (187 aa).

Residues 1 to 14 are Cytoplasmic-facing; that stretch reads MVAAARVVSGVKAE. A helical transmembrane segment spans residues 15–35; that stretch reads GLLRGACAALAAAAALLLGLS. Over 36–54 the chain is Extracellular; the sequence is TQTETVLLVRKKGTVKDVQ. Residues 55-75 form a helical membrane-spanning segment; the sequence is ALWVLAMAAASAAGYHLLQLL. The Cytoplasmic portion of the chain corresponds to 76 to 97; it reads KCLYLGRGGGRALAWTCLLLDK. The chain crosses the membrane as a helical span at residues 98–118; it reads ACAYATFATTVAAAQACVVAL. Residues 119 to 139 are Extracellular-facing; it reads DGAHALQWTKLCNIYTRFCEQ. Residues 140-160 form a helical membrane-spanning segment; the sequence is VAGSLVLGMLAAVGTAVLSAA. At 161–187 the chain is on the cytoplasmic side; the sequence is SARNVFRHYYCSSHSPPAPPPETCDAH.

This sequence belongs to the Casparian strip membrane proteins (CASP) family. In terms of assembly, homodimer and heterodimers.

It is found in the cell membrane. This chain is CASP-like protein 2C1, found in Zea mays (Maize).